The following is a 227-amino-acid chain: N-acetyltransferase family 8 member 7 (227 aa).

2 helical membrane-spanning segments follow: residues 36 to 56 (MLLLPRTLLLLLGVPLTLFLA) and 58 to 78 (GSWLLVLLSILTLFLSLWFLA). Positions 61 to 220 (LLVLLSILTL…PMINLKYSLT (160 aa)) constitute an N-acetyltransferase domain.

It belongs to the camello family.

It is found in the membrane. It carries out the reaction L-lysyl-[protein] + acetyl-CoA = N(6)-acetyl-L-lysyl-[protein] + CoA + H(+). Functionally, has histone acetyltransferase activity in vitro, with specificity for histone H4. The protein is N-acetyltransferase family 8 member 7 of Mus musculus (Mouse).